We begin with the raw amino-acid sequence, 1158 residues long: Putative HERC2-like protein 3 (1158 aa).

The segment at 281–302 (PRKKRVPKKPESTDDEEKIGNE) is disordered. Over residues 293–302 (TDDEEKIGNE) the composition is skewed to acidic residues. The 74-residue stretch at 587-660 (SGPELAAMMK…NYDLKLAELP (74 aa)) folds into the MIB/HERC2 domain. The tract at residues 662–684 (PAQPSAEDSDTEDDSEAEQTERN) is disordered. Residues 668–679 (EDSDTEDDSEAE) show a composition bias toward acidic residues.

This chain is Putative HERC2-like protein 3 (HERC2P3), found in Homo sapiens (Human).